The primary structure comprises 497 residues: MDFAIQAGDLGKYYGDCIVAGVFESRKLTEAAKALDEMCRGYLTKVLDQGDMDGRANTTLLLHNVPAIGSKRVLLVGLGKEEEYVEKVFLEAIRAAFKALHQTGVKDVGLCVADLIVKGRDTAWSVLQSTLLVEESVYRFDRLKSKREERQPSLQKIIFLIGDEAARAGAEQAFKQGAAIACGMNVTKDLGNLAPNICTPTYLAEQAGEMAKTYNLKLSVLEEKDMEALGMGALLAVARGSHQPAKLIVLEYHGREGIEKPVVLVGKGVTFDTGGISLKPAVDLDEMKYDMGGAASVFGTLTAVAEMKLPINVTAIIPTTENMPGGNATKPGDVVTSLSGQTIEILNTDAEGRLILCDALTYAERYNPDVVIDIATLTGACVVALGHVVSGLMGTDEPLVQELLQAGEKASDRAWQLPLGEEYQELLKSNFADMANIGGRWGGAITAACFLSRFTRKYRWAHLDIAGTAWKSGKEKGATGRPVPLLTQFLIDRAQQH.

Mn(2+)-binding residues include Lys267 and Asp272. Lys279 is a catalytic residue. Mn(2+)-binding residues include Asp290, Asp349, and Glu351. The active site involves Arg353.

Belongs to the peptidase M17 family. Requires Mn(2+) as cofactor.

The protein resides in the cytoplasm. It catalyses the reaction Release of an N-terminal amino acid, Xaa-|-Yaa-, in which Xaa is preferably Leu, but may be other amino acids including Pro although not Arg or Lys, and Yaa may be Pro. Amino acid amides and methyl esters are also readily hydrolyzed, but rates on arylamides are exceedingly low.. The catalysed reaction is Release of an N-terminal amino acid, preferentially leucine, but not glutamic or aspartic acids.. In terms of biological role, presumably involved in the processing and regular turnover of intracellular proteins. Catalyzes the removal of unsubstituted N-terminal amino acids from various peptides. The chain is Probable cytosol aminopeptidase from Nitrosomonas eutropha (strain DSM 101675 / C91 / Nm57).